The sequence spans 673 residues: Bifunctional polymyxin resistance protein ArnA (673 aa).

A formyltransferase ArnAFT region spans residues 1-311 (MKAIVFAYHD…EMGMVPQARL (311 aa)). The Proton donor; for formyltransferase activity role is filled by His-104. Residues Arg-114 and 136–140 (VSRAD) contribute to the (6R)-10-formyltetrahydrofolate site. The interval 321 to 673 (RRTRVLILGV…HTADATDTQG (353 aa)) is dehydrogenase ArnADH. NAD(+) contacts are provided by residues Asp-354 and 375–376 (DI). UDP-alpha-D-glucuronate is bound by residues Ala-400, Tyr-405, and 439–440 (TS). Residue Glu-441 is the Proton acceptor; for decarboxylase activity of the active site. UDP-alpha-D-glucuronate contacts are provided by residues Arg-467, Asn-499, 533 to 542 (KLVDGGAQKR), and Tyr-620. Arg-626 acts as the Proton donor; for decarboxylase activity in catalysis.

It in the N-terminal section; belongs to the Fmt family. UDP-L-Ara4N formyltransferase subfamily. The protein in the C-terminal section; belongs to the NAD(P)-dependent epimerase/dehydratase family. UDP-glucuronic acid decarboxylase subfamily. In terms of assembly, homohexamer, formed by a dimer of trimers.

It carries out the reaction UDP-alpha-D-glucuronate + NAD(+) = UDP-beta-L-threo-pentopyranos-4-ulose + CO2 + NADH. It catalyses the reaction UDP-4-amino-4-deoxy-beta-L-arabinose + (6R)-10-formyltetrahydrofolate = UDP-4-deoxy-4-formamido-beta-L-arabinose + (6S)-5,6,7,8-tetrahydrofolate + H(+). It functions in the pathway nucleotide-sugar biosynthesis; UDP-4-deoxy-4-formamido-beta-L-arabinose biosynthesis; UDP-4-deoxy-4-formamido-beta-L-arabinose from UDP-alpha-D-glucuronate: step 1/3. It participates in nucleotide-sugar biosynthesis; UDP-4-deoxy-4-formamido-beta-L-arabinose biosynthesis; UDP-4-deoxy-4-formamido-beta-L-arabinose from UDP-alpha-D-glucuronate: step 3/3. The protein operates within bacterial outer membrane biogenesis; lipopolysaccharide biosynthesis. Its function is as follows. Bifunctional enzyme that catalyzes the oxidative decarboxylation of UDP-glucuronic acid (UDP-GlcUA) to UDP-4-keto-arabinose (UDP-Ara4O) and the addition of a formyl group to UDP-4-amino-4-deoxy-L-arabinose (UDP-L-Ara4N) to form UDP-L-4-formamido-arabinose (UDP-L-Ara4FN). The modified arabinose is attached to lipid A and is required for resistance to polymyxin and cationic antimicrobial peptides. This is Bifunctional polymyxin resistance protein ArnA from Pectobacterium atrosepticum (strain SCRI 1043 / ATCC BAA-672) (Erwinia carotovora subsp. atroseptica).